Reading from the N-terminus, the 456-residue chain is Chromosomal replication initiator protein DnaA (456 aa).

The tract at residues 1–83 is domain I, interacts with DnaA modulators; that stretch reads MTASLWQQCL…LRFDIGNRPH (83 aa). The domain II stretch occupies residues 83-119; that stretch reads HPVAIARAPARGAAPVNNLQKSWESKADAKPEPNHKS. The domain III, AAA+ region stretch occupies residues 120–336; it reads NTNVNYTFEN…GALNRVIANA (217 aa). The ATP site is built by Gly164, Gly166, Lys167, and Thr168. The domain IV, binds dsDNA stretch occupies residues 337-456; it reads NFTGRAINID…YSNLIRTLSS (120 aa).

Belongs to the DnaA family. Oligomerizes as a right-handed, spiral filament on DNA at oriC.

The protein localises to the cytoplasm. In terms of biological role, plays an essential role in the initiation and regulation of chromosomal replication. ATP-DnaA binds to the origin of replication (oriC) to initiate formation of the DNA replication initiation complex once per cell cycle. Binds the DnaA box (a 9 base pair repeat at the origin) and separates the double-stranded (ds)DNA. Forms a right-handed helical filament on oriC DNA; dsDNA binds to the exterior of the filament while single-stranded (ss)DNA is stabiized in the filament's interior. The ATP-DnaA-oriC complex binds and stabilizes one strand of the AT-rich DNA unwinding element (DUE), permitting loading of DNA polymerase. After initiation quickly degrades to an ADP-DnaA complex that is not apt for DNA replication. Binds acidic phospholipids. The polypeptide is Chromosomal replication initiator protein DnaA (Aeromonas salmonicida (strain A449)).